The primary structure comprises 420 residues: Annetocin receptor (420 aa).

Over 1-54 (MEMDDDEAILLDDIYALASTPNQTIVTSSFPQTVSPGFLARRNEALAMVEVAVQ) the chain is Extracellular. N-linked (GlcNAc...) asparagine glycosylation is present at asparagine 22. A helical membrane pass occupies residues 55–75 (STILILTVVGNAAVLAMIVSL). The Cytoplasmic portion of the chain corresponds to 76–83 (SRHKDLGR). The helical transmembrane segment at 84 to 104 (MYTMIGHLSCADLFVAIFNLL) threads the bilayer. Residues 105–124 (PQLLWDVTHRFRGGRVLCKL) lie on the Extracellular side of the membrane. Cysteine 122 and cysteine 201 are oxidised to a cystine. A helical transmembrane segment spans residues 125–145 (VKYVQVVAMYASAYVLMSTAV). Over 146-166 (DRYTAICHPMRSHTWTSTTAH) the chain is Cytoplasmic. Residues 167-187 (YLVIGAWVLALVFAVPQLVIF) form a helical membrane-spanning segment. The Extracellular segment spans residues 188–212 (DYVEVVPGSGVYDCVDHFRPRWTLP). The helical transmembrane segment at 213–233 (VYITWFALAVYVIPLVVLATI) threads the bilayer. Residues 234 to 328 (YLRICVVVWK…KTKTVKLTLT (95 aa)) lie on the Cytoplasmic side of the membrane. The helical transmembrane segment at 329–349 (VVISYLVCWAPFFVSHIWSAW) threads the bilayer. The Extracellular portion of the chain corresponds to 350-360 (DPHAPFEGTEM). The helical transmembrane segment at 361–381 (VITLLLGSLNSCINPWIYLAF) threads the bilayer. Residues 382-420 (SDQLRRKVTQCCPRSWGQRPSTLSHDSTDFRSGSRPTHS) are Cytoplasmic-facing. The interval 397–420 (WGQRPSTLSHDSTDFRSGSRPTHS) is disordered. Over residues 399–420 (QRPSTLSHDSTDFRSGSRPTHS) the composition is skewed to polar residues.

It belongs to the G-protein coupled receptor 1 family. Vasopressin/oxytocin receptor subfamily. Nephridia in clitellum region.

The protein localises to the cell membrane. Its function is as follows. Receptor for annetocin. Activation by annetocin may induce egg-laying behavior through calcium-dependent signaling. This Eisenia fetida (Red wiggler worm) protein is Annetocin receptor.